Here is a 276-residue protein sequence, read N- to C-terminus: Secretagogin (276 aa).

5 EF-hand domains span residues 12 to 47, 105 to 140, 149 to 184, 197 to 232, and 240 to 276; these read LDAACFWQIWQRFDKDEKGYIKETELDAFFDDLLAK, DNSVEFMQIWRKYDADSSGFISAAELSNFLRDLFLH, ELEEYTSTMEKIFDRNKDGRLDLNDLARILALQENF, ERKRDFEKIFAHYDVSKTGALEGPEVDGFVKDMMEL, and VDLDKFREILLRHCDVNKDGKIQKSELALCLGLKINP. Ca(2+) is bound by residues D118, D120, S122, E129, D162, N164, D166, R168, D173, D210, S212, T214, E221, D254, N256, D258, K260, and E265.

In terms of tissue distribution, highly expressed in pancreas, in particular in pancreatic islets and pancreatic beta-cells. Detected in prostate, adrenal gland, small intestine, stomach and thyroid (at protein level).

The protein localises to the cytoplasm. Its subcellular location is the secreted. The protein resides in the cytoplasmic vesicle. It localises to the secretory vesicle membrane. The chain is Secretagogin (Scgn) from Rattus norvegicus (Rat).